Reading from the N-terminus, the 441-residue chain is Malate dehydrogenase [NADP], chloroplastic (441 aa).

The N-terminal 58 residues, 1–58 (MALTQLNSTCSKPQLHSSSQLSFLSRTRTRTLPRHYHSTFAPLHRTQHARISCSVAPN), are a transit peptide targeting the chloroplast. Cys76 and Cys81 are joined by a disulfide. Residue 105 to 111 (GAAGMIS) coordinates NADP(+). Arg186 and Arg192 together coordinate substrate. Asn199 contributes to the NADP(+) binding site. Gln206 provides a ligand contact to NAD(+). 223–225 (VGN) provides a ligand contact to NADP(+). Substrate contacts are provided by Asn225 and Arg256. The active-site Proton acceptor is His281. A disulfide bridge connects residues Cys417 and Cys429.

The protein belongs to the LDH/MDH superfamily. MDH type 2 family. Homodimer.

It localises to the plastid. It is found in the chloroplast. The catalysed reaction is (S)-malate + NADP(+) = oxaloacetate + NADPH + H(+). Chloroplast NADP-MDH is activated upon illumination. In order to be enzymatically active, disulfide bridges on the protein must be reduced by thioredoxin which receives electrons from ferredoxin and the electron transport system of photosynthesis. Functionally, the chloroplastic, NADP-dependent form is essential for the photosynthesis C4 cycle, which allows plants to circumvent the problem of photorespiration. In C4 plants, NADP-MDH activity acts to convert oxaloacetate to malate in chloroplasts of mesophyll cells for transport to the bundle sheath cells. This is Malate dehydrogenase [NADP], chloroplastic from Pisum sativum (Garden pea).